We begin with the raw amino-acid sequence, 571 residues long: Calcium-dependent protein kinase 16 (571 aa).

A disordered region spans residues 1–74 (MGLCFSSAAK…TRHTPPHGKV (74 aa)). G2 carries the N-myristoyl glycine lipid modification. C4 carries S-palmitoyl cysteine lipidation. Over residues 63 to 72 (TPTRHTPPHG) the composition is skewed to basic residues. The 261-residue stretch at 108–368 (YTIGKLLGHG…AAQALSHPWV (261 aa)) folds into the Protein kinase domain. ATP is bound by residues 114 to 122 (LGHGQFGYT) and K137. D234 (proton acceptor) is an active-site residue. Phosphoserine is present on S274. The segment at 374-404 (ASEIPIDISVLNNMRQFVKFSRLKQFALRAL) is autoinhibitory domain. EF-hand domains are found at residues 411 to 446 (EELA…DHPW), 448 to 483 (LKDA…VNQL), 490 to 525 (KWQQ…KGSI), and 528 to 555 (LLEE…ASIK). Ca(2+) is bound by residues D424, D426, N428, E435, D461, N463, D465, E472, D503, D505, D507, E514, D533, D535, D537, and K539. At S541 the chain carries Phosphoserine. E544 contacts Ca(2+).

This sequence belongs to the protein kinase superfamily. Ser/Thr protein kinase family. CDPK subfamily.

Its subcellular location is the cell membrane. The protein localises to the nucleus. It catalyses the reaction L-seryl-[protein] + ATP = O-phospho-L-seryl-[protein] + ADP + H(+). The catalysed reaction is L-threonyl-[protein] + ATP = O-phospho-L-threonyl-[protein] + ADP + H(+). With respect to regulation, activated by calcium. Autophosphorylation may play an important role in the regulation of the kinase activity. Functionally, may play a role in signal transduction pathways that involve calcium as a second messenger. The protein is Calcium-dependent protein kinase 16 (CPK16) of Arabidopsis thaliana (Mouse-ear cress).